A 278-amino-acid chain; its full sequence is Energy-coupling factor transporter ATP-binding protein EcfA1 (278 aa).

The ABC transporter domain occupies 5–239; sequence LLLESVSYQY…QDKLEAAGID (235 aa). Residue 39 to 46 participates in ATP binding; sequence GPNGSGKS.

It belongs to the ABC transporter superfamily. Energy-coupling factor EcfA family. Forms a stable energy-coupling factor (ECF) transporter complex composed of 2 membrane-embedded substrate-binding proteins (S component), 2 ATP-binding proteins (A component) and 2 transmembrane proteins (T component).

Its subcellular location is the cell membrane. Functionally, ATP-binding (A) component of a common energy-coupling factor (ECF) ABC-transporter complex. Unlike classic ABC transporters this ECF transporter provides the energy necessary to transport a number of different substrates. The sequence is that of Energy-coupling factor transporter ATP-binding protein EcfA1 from Halalkalibacterium halodurans (strain ATCC BAA-125 / DSM 18197 / FERM 7344 / JCM 9153 / C-125) (Bacillus halodurans).